We begin with the raw amino-acid sequence, 467 residues long: Acid phosphatase PHO11 (467 aa).

The signal sequence occupies residues 1–17 (MLKSAVYSILAASLVNA). Residue His-75 is the Nucleophile of the active site. N-linked (GlcNAc...) asparagine glycosylation is found at Asn-97, Asn-162, Asn-192, Asn-250, and Asn-315. Asp-338 functions as the Proton donor in the catalytic mechanism. Asn-356, Asn-390, Asn-439, Asn-445, and Asn-461 each carry an N-linked (GlcNAc...) asparagine glycan.

This sequence belongs to the histidine acid phosphatase family. Glycosylated during secretion across the membrane.

The catalysed reaction is a phosphate monoester + H2O = an alcohol + phosphate. The sequence is that of Acid phosphatase PHO11 (PHO11) from Saccharomyces cerevisiae (strain ATCC 204508 / S288c) (Baker's yeast).